A 363-amino-acid chain; its full sequence is Beta-1,3-N-acetylglucosaminyltransferase lunatic fringe (363 aa).

The Cytoplasmic segment spans residues 1–8 (MLKSCGRK). The helical; Signal-anchor for type II membrane protein transmembrane segment at 9 to 29 (LLLSLVGSMFTCLLVLMVEPP) threads the bilayer. Residues 30–363 (GRPGLARGEA…TPWCPSNVVY (334 aa)) lie on the Lumenal side of the membrane. Arg-113 contacts substrate. Asn-151 carries N-linked (GlcNAc...) asparagine glycosylation. 2 disulfide bridges follow: Cys-152/Cys-163 and Cys-181/Cys-244. Residue Asp-185 participates in substrate binding. Asp-186 lines the Mn(2+) pocket. Asp-274 is an active-site residue. His-298 contacts Mn(2+). A disulfide bridge links Cys-348 with Cys-357.

Belongs to the glycosyltransferase 31 family. Requires Mn(2+) as cofactor. Co(2+) is required as a cofactor. Post-translationally, a soluble form may be derived from the membrane form by proteolytic processing.

The protein resides in the golgi apparatus membrane. It catalyses the reaction 3-O-(alpha-L-fucosyl)-L-threonyl-[EGF-like domain protein] + UDP-N-acetyl-alpha-D-glucosamine = 3-O-(N-acetyl-beta-D-glucosaminyl-(1-&gt;3)-alpha-L-fucosyl)-L-threonyl-[EGF-like domain protein] + UDP + H(+). The enzyme catalyses 3-O-(alpha-L-fucosyl)-L-seryl-[EGF-like domain protein] + UDP-N-acetyl-alpha-D-glucosamine = 3-O-(N-acetyl-beta-D-glucosaminyl-(1-&gt;3)-alpha-L-fucosyl)-L-seryl-[EGF-like domain protein] + UDP + H(+). Glycosyltransferase that initiates the elongation of O-linked fucose residues attached to EGF-like repeats in the extracellular domain of Notch molecules. Essential mediator of somite segmentation and patterning. This Gallus gallus (Chicken) protein is Beta-1,3-N-acetylglucosaminyltransferase lunatic fringe (LFNG).